Consider the following 538-residue polypeptide: Lipid scramblase CLPTM1L (538 aa).

Topologically, residues 1–10 (MWSGRSSFTS) are cytoplasmic. A helical transmembrane segment spans residues 11 to 31 (LVVGVFVVYVVHTCWVMYGIV). The Extracellular portion of the chain corresponds to 32–284 (YTRPCSGDAN…VKGIFVDTNL (253 aa)). N-linked (GlcNAc...) asparagine glycosylation is found at N91, N101, and N229. The helical transmembrane segment at 285 to 305 (YFLALTFFVAAFHLLFDFLAF) threads the bilayer. The Cytoplasmic portion of the chain corresponds to 306–324 (KNDISFWKKKKSMIGMSTK). Residues 325-342 (AVLWRCFSTVVIFLFLLD) form a helical membrane-spanning segment. Residues 343 to 346 (EQTS) are Extracellular-facing. The chain crosses the membrane as a helical span at residues 347–364 (LLVLVPAGVGAAIELWKV). Topologically, residues 365–402 (KKALKMTIFWRGLMPEFQFGTYSESERKTEEYDTQAMK) are cytoplasmic. Residues 403–423 (YLSYLLYPLCVGGAVYSLLNI) form a helical membrane-spanning segment. The Extracellular portion of the chain corresponds to 424–428 (KYKSW). A helical transmembrane segment spans residues 429-449 (YSWLINSFVNGVYAFGFLFML). The Cytoplasmic portion of the chain corresponds to 450 to 538 (PQLFVNYKLK…EKATRAPHTD (89 aa)).

This sequence belongs to the CLPTM1 family. In terms of tissue distribution, ubiquitously expressed.

The protein resides in the endoplasmic reticulum membrane. The catalysed reaction is a 6-(alpha-D-glucosaminyl)-1-(1,2-diacyl-sn-glycero-3-phospho)-1D-myo-inositol(in) = a 6-(alpha-D-glucosaminyl)-1-(1,2-diacyl-sn-glycero-3-phospho)-1D-myo-inositol(out). It carries out the reaction 6-(alpha-D-glucosaminyl)-(1-octadecanoyl,2-(9Z)-octadecenoyl-sn-glycero-3-phospho)-1D-myo-inositol(in) = 6-(alpha-D-glucosaminyl)-(1-octadecanoyl,2-(9Z)-octadecenoyl-sn-glycero-3-phospho)-1D-myo-inositol(out). It catalyses the reaction a 1,2-diacyl-sn-glycero-3-phospho-(1D-myo-inositol)(in) = a 1,2-diacyl-sn-glycero-3-phospho-(1D-myo-inositol)(out). The enzyme catalyses a 1,2-diacyl-sn-glycero-3-phosphocholine(in) = a 1,2-diacyl-sn-glycero-3-phosphocholine(out). The catalysed reaction is a 1,2-diacyl-sn-glycero-3-phosphoethanolamine(in) = a 1,2-diacyl-sn-glycero-3-phosphoethanolamine(out). Functionally, scramblase that mediates the translocation of glucosaminylphosphatidylinositol (alpha-D-GlcN-(1-6)-(1,2-diacyl-sn-glycero-3-phospho)-1D-myo-inositol, GlcN-PI) across the endoplasmic reticulum (ER) membrane, from the cytosolic leaflet to the luminal leaflet of the ER membrane, where it participates in the biosynthesis of glycosylphosphatidylinositol (GPI). GPI is a lipid glycoconjugate involved in post-translational modification of proteins. Can also translocate 1,2-diacyl-sn-glycero-3-phospho-(1D-myo-inositol) (phosphatidylinositol or PI), as well as several other phospholipids (1,2-diacyl-sn-glycero-3-phosphocholine, 1,2-diacyl-sn-glycero-3-phosphoethanolamine), and N-acetylglucosaminylphosphatidylinositol (GlcNAc-PI) in vitro. This Homo sapiens (Human) protein is Lipid scramblase CLPTM1L (CLPTM1L).